Consider the following 443-residue polypeptide: MESLASLYKNHIATLQERTRDALARFKLDALLIHSGELFNVFLDDHPYPFKVNPQFKAWVPVTQVPNCWLLVDGVNKPKLWFYLPVDYWHNVEPLPTSFWTEDVEVIALPKADGIGSLLPAARGNIGYIGPVPERALQLGIEASNINPKGVIDYLHYYRSFKTEYELACMREAQKMAVNGHRAAEEAFRSGMSEFDINIAYLTATGHRDTDVPYSNIVALNEHASVLHYTKLDHQAPEEMRSFLLDAGAEYNGYAADLTRTWSAKSDNDYAQLVKDVNDEQLALIATMKAGVSYVDYHLQFHQRIAKLLRKHQIITDMSEEAMVENDLTGPFMPHGIGHPLGLQVHDVAGFMQDDSGTHLAAPAKYPYLRCTRILQPGMVLTIEPGIYFIESLLAPWREGQFSKHFNWQKIEALKPFSGIRIEDNVVIHENNVENMTRDLKLA.

The Mn(2+) site is built by aspartate 246, aspartate 257, histidine 339, glutamate 384, and glutamate 423.

Belongs to the peptidase M24B family. Bacterial-type prolidase subfamily. Mn(2+) serves as cofactor.

It carries out the reaction Xaa-L-Pro dipeptide + H2O = an L-alpha-amino acid + L-proline. Functionally, splits dipeptides with a prolyl residue in the C-terminal position. This chain is Xaa-Pro dipeptidase, found in Shigella boydii serotype 18 (strain CDC 3083-94 / BS512).